Here is a 97-residue protein sequence, read N- to C-terminus: Serine protease inhibitor Kazal-type 14 (97 aa).

Residues 1–21 (MAKSFPVFSLLSFILIHLVLS) form the signal peptide. The Kazal-like domain occupies 34–97 (GIIKVKCPYE…RIRFYHDGKC (64 aa)). Intrachain disulfides connect C40-C79, C57-C76, and C65-C97. An N-linked (GlcNAc...) asparagine glycan is attached at N51.

Its subcellular location is the secreted. Its function is as follows. May be a serine protease inhibitor. This is Serine protease inhibitor Kazal-type 14 (SPINK14) from Homo sapiens (Human).